Consider the following 192-residue polypeptide: Signal peptidase complex catalytic subunit sec11 (192 aa).

Residues 1–18 (MLSFLSSNLSSTRQSLAQ) are Cytoplasmic-facing. Residues 19-39 (VLNFALVLSTAFMLWKGLSVF) form a helical; Signal-anchor for type II membrane protein membrane-spanning segment. Over 40-192 (TASSSPIVVV…GLMVILQREQ (153 aa)) the chain is Lumenal. Residues S53, H92, and D133 each act as charge relay system in the active site. The segment at 177-188 (VLLGIMGLMVIL) is C-terminal short (CTS) helix.

This sequence belongs to the peptidase S26B family. In terms of assembly, component of the signal peptidase complex (SPC) composed of a catalytic subunit SEC11 and three accessory subunits SPC1, SPC2 and SPC3. The complex induces a local thinning of the ER membrane which is used to measure the length of the signal peptide (SP) h-region of protein substrates. This ensures the selectivity of the complex towards h-regions shorter than 18-20 amino acids. SPC associates with the translocon complex.

The protein localises to the endoplasmic reticulum membrane. The catalysed reaction is Cleavage of hydrophobic, N-terminal signal or leader sequences from secreted and periplasmic proteins.. In terms of biological role, catalytic component of the signal peptidase complex (SPC) which catalyzes the cleavage of N-terminal signal sequences from nascent proteins as they are translocated into the lumen of the endoplasmic reticulum. Specifically cleaves N-terminal signal peptides that contain a hydrophobic alpha-helix (h-region) shorter than 18-20 amino acids. This chain is Signal peptidase complex catalytic subunit sec11 (sec11), found in Neosartorya fischeri (strain ATCC 1020 / DSM 3700 / CBS 544.65 / FGSC A1164 / JCM 1740 / NRRL 181 / WB 181) (Aspergillus fischerianus).